The primary structure comprises 461 residues: Argininosuccinate lyase (461 aa).

Belongs to the lyase 1 family. Argininosuccinate lyase subfamily.

The protein resides in the cytoplasm. The enzyme catalyses 2-(N(omega)-L-arginino)succinate = fumarate + L-arginine. The protein operates within amino-acid biosynthesis; L-arginine biosynthesis; L-arginine from L-ornithine and carbamoyl phosphate: step 3/3. This chain is Argininosuccinate lyase, found in Laribacter hongkongensis (strain HLHK9).